We begin with the raw amino-acid sequence, 691 residues long: Germ cell nuclear acidic protein (691 aa).

The SUMO interaction motif 1 (SIM) motif lies at 22–25 (ILNV). The tract at residues 25 to 488 (VQSSSDDTSG…GAAKVEKRKT (464 aa)) is disordered. A compositionally biased stretch (low complexity) spans 27–36 (SSSDDTSGSS). Residues 48 to 63 (CILNVQSRSGDTSGSS) show a composition bias toward polar residues. 3 consecutive short sequence motifs (SUMO interaction motif 1 (SIM)) follow at residues 76 to 79 (VVVI), 97 to 100 (LLEI), and 121 to 124 (IVIS). The span at 86–97 (ECHTHEEKKAKL) shows a compositional bias: basic and acidic residues. Acidic residues predominate over residues 124 to 333 (SDDDNDDDNG…VPDDNSDDLE (210 aa)). A compositionally biased stretch (basic residues) spans 467 to 488 (GHKKRGPSKKKPGAAKVEKRKT). The SprT-like domain maps to 522 to 677 (VQRIYDLFNR…AKCKGSLVMV (156 aa)).

It belongs to the serine-aspartate repeat-containing protein (SDr) family. As to quaternary structure, interacts (via SIM domains) with SUMO2; this interaction allows the GCNA recruitment to DPCs sites. Interacts with TOP2A; this interaction allows the resolution of topoisomerase II (TOP2A) DNA-protein cross-links. In terms of tissue distribution, expressed in germ cells of the testis (at protein level). Detected in skeletal muscle, liver, kidney, pancreas, heart, lung and brain. Expressed throughout spermatogenesis, from spermatogonia to elongated spermatids, in normal adult testis (at protein level).

The protein localises to the nucleus. It localises to the PML body. It is found in the chromosome. Functionally, may play a role in DNA-protein cross-links (DPCs) clearance through a SUMO-dependent recruitment to sites of DPCs, ensuring the genomic stability by protecting germ cells and early embryos from various sources of damage. Can resolve the topoisomerase II (TOP2A) DPCs. This Homo sapiens (Human) protein is Germ cell nuclear acidic protein.